Reading from the N-terminus, the 921-residue chain is Translation initiation factor IF-2 (921 aa).

Disordered regions lie at residues 81-118, 175-194, and 219-301; these read AVAESLEEKPAEPVAPAAPTPPEVPAAAPAPPKAAAAP, PVVEKPKVPAQPDKPSANQA, and VAPA…KKHE. Residues 96–112 are compositionally biased toward pro residues; the sequence is PAAPTPPEVPAAAPAPP. Low complexity predominate over residues 229 to 241; sequence RPSPAAGAPSRGA. Residues 292–301 show a composition bias toward basic and acidic residues; that stretch reads KKKEQPKKHE. One can recognise a tr-type G domain in the interval 421-590; sequence KRPPVVTIMG…LLQADLMELK (170 aa). Residues 430-437 form a G1 region; that stretch reads GHVDHGKT. 430–437 lines the GTP pocket; the sequence is GHVDHGKT. The tract at residues 455–459 is G2; sequence GITQH. The interval 476–479 is G3; it reads DTPG. Residues 476–480 and 530–533 each bind GTP; these read DTPGH and NKID. Residues 530-533 are G4; sequence NKID. The segment at 566–568 is G5; it reads SAK.

Belongs to the TRAFAC class translation factor GTPase superfamily. Classic translation factor GTPase family. IF-2 subfamily.

The protein resides in the cytoplasm. Functionally, one of the essential components for the initiation of protein synthesis. Protects formylmethionyl-tRNA from spontaneous hydrolysis and promotes its binding to the 30S ribosomal subunits. Also involved in the hydrolysis of GTP during the formation of the 70S ribosomal complex. This chain is Translation initiation factor IF-2, found in Pelobacter propionicus (strain DSM 2379 / NBRC 103807 / OttBd1).